We begin with the raw amino-acid sequence, 235 residues long: uncharacterized protein (235 aa).

This is an uncharacterized protein from Shigella flexneri.